Consider the following 217-residue polypeptide: Large ribosomal subunit protein uL3 (217 aa).

The disordered stretch occupies residues 134–154 (DATHGNSLSHRAPGSIGQCQT). Residue Gln153 is modified to N5-methylglutamine.

It belongs to the universal ribosomal protein uL3 family. In terms of assembly, part of the 50S ribosomal subunit. Forms a cluster with proteins L14 and L19. Methylated by PrmB.

In terms of biological role, one of the primary rRNA binding proteins, it binds directly near the 3'-end of the 23S rRNA, where it nucleates assembly of the 50S subunit. In Coxiella burnetii (strain Dugway 5J108-111), this protein is Large ribosomal subunit protein uL3.